Reading from the N-terminus, the 304-residue chain is Phosphatidylinositol mannoside acyltransferase (304 aa).

Catalysis depends on histidine 126, which acts as the Proton acceptor. Hexadecanoyl-CoA is bound by residues histidine 126 and arginine 164. Glutamate 200 is an active-site residue. The hexadecanoyl-CoA site is built by serine 206 and glutamate 229.

Belongs to the LpxL/LpxM/LpxP family. Monomer.

The protein resides in the cell inner membrane. The enzyme catalyses a 2,6-O-bis(alpha-D-mannopyranosyl)-1-phosphatidyl-1D-myo-inositol + an acyl-CoA = a 2-O-(alpha-D-mannosyl)-6-O-(6-O-acyl-alpha-D-mannosyl)-1-phosphatidyl-1D-myo-inositol + CoA. It catalyses the reaction a 1,2-diacyl-sn-glycero-3-phospho-[alpha-D-mannopyranosyl-(1&lt;-&gt;6)-D-myo-inositol] + an acyl-CoA = a 1,2-diacyl-sn-glycero-3-phospho-[alpha-D-6-acyl-mannopyranosyl-(1&lt;-&gt;6)-D-myo-inositol] + CoA. It functions in the pathway phospholipid metabolism; phosphatidylinositol metabolism. In terms of biological role, catalyzes the transfer of a palmitoyl moiety from palmitoyl-CoA to the 6-position of the mannose ring linked to the 2-position of myo-inositol in phosphatidyl-myo-inositol monomannoside (PIM1) or dimannoside (PIM2). This Mycolicibacterium smegmatis (strain ATCC 700084 / mc(2)155) (Mycobacterium smegmatis) protein is Phosphatidylinositol mannoside acyltransferase.